A 260-amino-acid polypeptide reads, in one-letter code: Histidinol-phosphatase (260 aa).

Mg(2+)-binding residues include E67, D83, I85, and D86. Substrate is bound at residue E67. Substrate is bound by residues I85 to T88, R185, and D213. Residue D213 participates in Mg(2+) binding.

This sequence belongs to the inositol monophosphatase superfamily. Mg(2+) serves as cofactor.

The catalysed reaction is L-histidinol phosphate + H2O = L-histidinol + phosphate. It participates in amino-acid biosynthesis; L-histidine biosynthesis; L-histidine from 5-phospho-alpha-D-ribose 1-diphosphate: step 8/9. In terms of biological role, catalyzes the dephosphorylation of histidinol-phosphate to histidinol, the direct precursor of histidine. This chain is Histidinol-phosphatase (hisN), found in Mycobacterium tuberculosis (strain ATCC 25618 / H37Rv).